A 676-amino-acid polypeptide reads, in one-letter code: Methionine--tRNA ligase (676 aa).

The 'HIGH' region motif lies at 15–25; that stretch reads PYANGSIHLGH. The Zn(2+) site is built by Cys-146, Cys-149, Cys-159, and Cys-162. The 'KMSKS' region signature appears at 332–336; that stretch reads KMSKS. Lys-335 provides a ligand contact to ATP. Residues 574–676 form the tRNA-binding domain; that stretch reads DFAKVDMRIA…SGAQPGMQVK (103 aa).

It belongs to the class-I aminoacyl-tRNA synthetase family. MetG type 1 subfamily. In terms of assembly, homodimer. The cofactor is Zn(2+).

It is found in the cytoplasm. It carries out the reaction tRNA(Met) + L-methionine + ATP = L-methionyl-tRNA(Met) + AMP + diphosphate. In terms of biological role, is required not only for elongation of protein synthesis but also for the initiation of all mRNA translation through initiator tRNA(fMet) aminoacylation. This Pectobacterium atrosepticum (strain SCRI 1043 / ATCC BAA-672) (Erwinia carotovora subsp. atroseptica) protein is Methionine--tRNA ligase.